The chain runs to 316 residues: Retinol dehydrogenase 11 (316 aa).

The chain crosses the membrane as a helical; Signal-anchor for type II membrane protein span at residues 1–21; it reads MFGFLLLLSLPFILYLVTPKI. Topologically, residues 22 to 316 are cytoplasmic; that stretch reads RKMLSSGVCT…CDLLGLPVDW (295 aa). Residue 45 to 51 participates in NADP(+) binding; the sequence is GANTGIG. At Lys-109 the chain carries N6-acetyllysine. Ser-174 is a binding site for substrate. Tyr-199 functions as the Proton acceptor in the catalytic mechanism.

This sequence belongs to the short-chain dehydrogenases/reductases (SDR) family. Post-translationally, not glycosylated. Expressed at high level in liver and testis. Expressed at lower levels in smooth muscle, thymus, submaxillary gland and epididymis. In testis, expression is restricted to pachytene spermatocytes. Also expressed in four layers of the retina, including the outer segment of rods and cones.

It localises to the endoplasmic reticulum membrane. The catalysed reaction is all-trans-retinol + NADP(+) = all-trans-retinal + NADPH + H(+). It carries out the reaction 11-cis-retinol + NADP(+) = 11-cis-retinal + NADPH + H(+). It catalyses the reaction 9-cis-retinol + NADP(+) = 9-cis-retinal + NADPH + H(+). The enzyme catalyses 13-cis-retinol + NADP(+) = 13-cis-retinal + NADPH + H(+). The catalysed reaction is a medium-chain primary fatty alcohol + NADP(+) = a medium-chain fatty aldehyde + NADPH + H(+). It carries out the reaction (2E,6Z)-nona-2,6-dien-1-ol + NADP(+) = (2E,6Z)-nona-2,6-dienal + NADPH + H(+). It catalyses the reaction (E)-oct-2-en-1-ol + NADP(+) = (2E)-octenal + NADPH + H(+). The enzyme catalyses (E)-non-2-en-1-ol + NADP(+) = (E)-non-2-enal + NADPH + H(+). The catalysed reaction is heptan-1-ol + NADP(+) = heptanal + NADPH + H(+). It carries out the reaction hexan-1-ol + NADP(+) = hexanal + NADPH + H(+). It catalyses the reaction decan-1-ol + NADP(+) = decanal + NADPH + H(+). The enzyme catalyses nonan-1-ol + NADP(+) = nonanal + NADPH + H(+). The catalysed reaction is octan-1-ol + NADP(+) = octanal + NADPH + H(+). It carries out the reaction (Z)-non-6-en-1-ol + NADP(+) = (Z)-non-6-enal + NADPH + H(+). It functions in the pathway cofactor metabolism; retinol metabolism. Its function is as follows. Retinol dehydrogenase with a clear preference for NADP. Displays high activity towards 9-cis, 11-cis and all-trans-retinol, and to a lesser extent on 13-cis-retinol. Also exhibits reductive activity towards toxic lipid peroxidation products such as medium-chain aldehydes trans-2-nonenal, nonanal, and cis-6-nonenal. Has no dehydrogenase activity towards steroid. Seems to be required for homeostasis of retinol in liver and testis. This chain is Retinol dehydrogenase 11 (Rdh11), found in Mus musculus (Mouse).